A 672-amino-acid chain; its full sequence is MSQKDIEMELKELRNKLNRWSNEYYVLDTPSVEDSVYDKHYQRLLELEQANPDLVTADSPSQRVGGKVLSGFTKVSHDIPMLSLGDVFSKEELIEFLERLENSVEQKLDYSCELKIDGLAISLTYENGKFIKGSTRGNGVIGEDITENLKTIKAIPMELNEPVSIEVRGECYMPKKSFVELNTKREAEGQAVFANPRNAAAGSLRQLDTKITASRNLSTFIYYLMEPEKLGIKTQTEALNKLESWGFKVNNESKQVKTKEEIFAYIDKATDQRANLPYDIDGIVLKAESFAVQSQVGNTVKVPRWAIAYKFPPDEQETKVLDIEWTVGRTGVVTPTAVMEPVTLAGTTVARASLHNPDYLKEKDIRIGDTVKLHKAGDIIPEISEVVLAKRTEDSVEYQIPTECPECGAKLVHLDDEVALRCINPQCPALVKESLTHFASRNAMDIRGLGPRIIEQLYNREMIKDVAGIYSLTFEQLITLDKFKEKSANNLLTAIDNSRNNSIERLIFGLGIRHVGAKVARILAENYKSMDNLAKAKSDEISTIDSLGKIIGDSVEMYFADEHVMELLDELRQAGVNLEFLGKTREEQLESSTDSSFNGLRVVLTGTLDTLKRSEAKSWLEAHGAKVTGSVSKKTDLLIAGHDAGSKLTKAQELNVRVMNEAEFIQQMEEES.

NAD(+)-binding positions include 34–38 (DSVYD), 83–84 (SL), and Glu-113. Lys-115 serves as the catalytic N6-AMP-lysine intermediate. NAD(+)-binding residues include Arg-136, Glu-170, Lys-286, and Lys-310. Zn(2+) is bound by residues Cys-404, Cys-407, Cys-422, and Cys-427. The 81-residue stretch at 592–672 (STDSSFNGLR…EFIQQMEEES (81 aa)) folds into the BRCT domain.

This sequence belongs to the NAD-dependent DNA ligase family. LigA subfamily. The cofactor is Mg(2+). It depends on Mn(2+) as a cofactor.

It catalyses the reaction NAD(+) + (deoxyribonucleotide)n-3'-hydroxyl + 5'-phospho-(deoxyribonucleotide)m = (deoxyribonucleotide)n+m + AMP + beta-nicotinamide D-nucleotide.. Its function is as follows. DNA ligase that catalyzes the formation of phosphodiester linkages between 5'-phosphoryl and 3'-hydroxyl groups in double-stranded DNA using NAD as a coenzyme and as the energy source for the reaction. It is essential for DNA replication and repair of damaged DNA. The sequence is that of DNA ligase from Ligilactobacillus salivarius (strain UCC118) (Lactobacillus salivarius).